We begin with the raw amino-acid sequence, 338 residues long: D-erythrose-4-phosphate dehydrogenase (338 aa).

11–12 provides a ligand contact to NAD(+); sequence RI. Residues 153–155, Arg199, 212–213, and Arg235 contribute to the substrate site; these read SCT and TK. Cys154 serves as the catalytic Nucleophile. Asn317 provides a ligand contact to NAD(+).

The protein belongs to the glyceraldehyde-3-phosphate dehydrogenase family. Epd subfamily. As to quaternary structure, homotetramer.

It localises to the cytoplasm. It carries out the reaction D-erythrose 4-phosphate + NAD(+) + H2O = 4-phospho-D-erythronate + NADH + 2 H(+). Its pathway is cofactor biosynthesis; pyridoxine 5'-phosphate biosynthesis; pyridoxine 5'-phosphate from D-erythrose 4-phosphate: step 1/5. In terms of biological role, catalyzes the NAD-dependent conversion of D-erythrose 4-phosphate to 4-phosphoerythronate. In Shewanella piezotolerans (strain WP3 / JCM 13877), this protein is D-erythrose-4-phosphate dehydrogenase.